The sequence spans 155 residues: MTVVLDTLVAVRRTAMDLLARREHGRVELTRKLRQRGAEPEMIETALDRLTEEGLLSESRYLESFVSYRARSGYGPARIREELSQRGLQRADIDLALRECGISWQAQLEDTWRRKFSGHLPIDARERAKQGRFLSYRGFSMEMISRLLSGRDMDD.

This sequence belongs to the RecX family.

It is found in the cytoplasm. In terms of biological role, modulates RecA activity. This is Regulatory protein RecX from Pseudomonas fluorescens (strain SBW25).